The following is a 906-amino-acid chain: Protein kintoun (906 aa).

A Phosphoserine modification is found at serine 376. Disordered regions lie at residues 614–691 (QQQK…RKQR) and 793–906 (RKKN…DEDM). Residues 618 to 631 (KLNKKQRKRNKKQR) are compositionally biased toward basic residues. The segment covering 639 to 655 (EELKAAQEELQLQHEKQ) has biased composition (basic and acidic residues). Over residues 793–808 (RKKNQKRRDCKLRAQQ) the composition is skewed to basic residues. Serine 812 is modified (phosphoserine). Polar residues predominate over residues 837–850 (ANAQYFKQPNNNNG). 2 stretches are compositionally biased toward basic and acidic residues: residues 851 to 865 (HDQD…HDSG) and 875 to 887 (NNEE…EADA). Positions 894–906 (EMDDDDEDEDEDM) are enriched in acidic residues.

It belongs to the PIH1 family. Kintoun subfamily. In terms of assembly, interacts with Pp1alpha-96A, Pp1-87B, Pp1-13C and flw.

It is found in the cytoplasm. Its function is as follows. Required for cytoplasmic pre-assembly of axonemal dyneins, thereby playing a central role in motility in cilia and flagella. Involved in pre-assembly of dynein arm complexes in the cytoplasm before intraflagellar transport loads them for the ciliary compartment. The chain is Protein kintoun from Drosophila virilis (Fruit fly).